We begin with the raw amino-acid sequence, 328 residues long: GMP reductase (328 aa).

Catalysis depends on Cys176, which acts as the Thioimidate intermediate. 205–228 (IIADGGIRTHGDIAKSIRFGASMI) contacts NADP(+).

This sequence belongs to the IMPDH/GMPR family. GuaC type 2 subfamily.

It carries out the reaction IMP + NH4(+) + NADP(+) = GMP + NADPH + 2 H(+). Functionally, catalyzes the irreversible NADPH-dependent deamination of GMP to IMP. It functions in the conversion of nucleobase, nucleoside and nucleotide derivatives of G to A nucleotides, and in maintaining the intracellular balance of A and G nucleotides. The chain is GMP reductase from Streptococcus pneumoniae serotype 2 (strain D39 / NCTC 7466).